A 588-amino-acid chain; its full sequence is Outer membrane transporter CdiB (588 aa).

The helical transmembrane segment at 33–55 (VVRYFSLLPCLCILSFSSPAAML) threads the bilayer. Positions 104–179 (FTVSRIVVSG…GVLHITVMEG (76 aa)) constitute a POTRA domain.

Belongs to the TPS (TC 1.B.20) family.

It localises to the cell outer membrane. Its function is as follows. Potential outer membrane protein component of a toxin-immunity protein module, which functions as a cellular contact-dependent growth inhibition (CDI) system. CDI modules allow bacteria to communicate with and inhibit the growth of closely related neighboring bacteria in a contact-dependent fashion. This protein may be required for secretion and assembly of the CdiA toxin protein. In terms of biological role, probable member of a two partner secretion pathway (TPS) in which it mediates the secretion of CdiA. The chain is Outer membrane transporter CdiB from Escherichia coli O6:K15:H31 (strain 536 / UPEC).